Here is a 196-residue protein sequence, read N- to C-terminus: SPPVCGTELLEVGEECDCGSPTNCRNPCCDATTCKLHSWVECESGECCEQCRFIKAGNVCRPQRSECDIAESCTGQSADCPTDDIQRNGQPCLNNFGYCYNGMCPIMYHQCIALFGASATVSPDSCFDSNLDGQGLFYCRRERARIFPCAKEDVKCGRLFCNYFQSSCLYQYSGDIDFGMVDDGTKCAEGKVCNSN.

The 87-residue stretch at 2–88 folds into the Disintegrin domain; the sequence is PPVCGTELLE…DCPTDDIQRN (87 aa). The Ca(2+) site is built by Val-4, Leu-9, Glu-11, Glu-14, and Asp-17. Intrachain disulfides connect Cys-5–Cys-34, Cys-16–Cys-29, Cys-18–Cys-24, Cys-28–Cys-51, Cys-42–Cys-48, Cys-47–Cys-73, Cys-60–Cys-80, Cys-67–Cys-99, Cys-92–Cys-104, Cys-111–Cys-161, Cys-126–Cys-168, Cys-139–Cys-149, and Cys-156–Cys-193. The short motif at 66-68 is the D/ECD-tripeptide element; that stretch reads ECD.

It belongs to the venom metalloproteinase (M12B) family. P-III subfamily. P-IIIa sub-subfamily. In terms of assembly, monomer. Zn(2+) is required as a cofactor. In terms of processing, glycosylated. In terms of tissue distribution, expressed by the venom gland.

It localises to the secreted. In terms of biological role, the hemorrhagic metalloproteinase-disintegrin-like bothrojarin-1 is a potent inhibitor of collagen-induced platelet aggregation by blockage of alpha-2/beta-1 (ITGA2/ITGB1) integrin. It does not present any fibrinogen-clotting activity. This is Zinc metalloproteinase-disintegrin-like bothrojarin-3 from Bothrops jararaca (Jararaca).